The primary structure comprises 229 residues: RNA chaperone ProQ (229 aa).

Residues 105-178 (EAKARVQAQR…PREEKHTPVS (74 aa)) are disordered. The segment covering 117 to 136 (QQAKKREAAAAAGDKESAPR) has biased composition (basic and acidic residues). A compositionally biased stretch (basic residues) spans 137–146 (RERKPRPAAP). The span at 147 to 176 (RRKEGAERKPRAEKPAAKAPRAPREEKHTP) shows a compositional bias: basic and acidic residues.

The protein belongs to the ProQ family.

Its subcellular location is the cytoplasm. Functionally, RNA chaperone with significant RNA binding, RNA strand exchange and RNA duplexing activities. May regulate ProP activity through an RNA-based, post-transcriptional mechanism. In Escherichia fergusonii (strain ATCC 35469 / DSM 13698 / CCUG 18766 / IAM 14443 / JCM 21226 / LMG 7866 / NBRC 102419 / NCTC 12128 / CDC 0568-73), this protein is RNA chaperone ProQ.